The chain runs to 60 residues: Single-pass membrane and coiled-coil domain-containing protein 4 homolog (60 aa).

Residues 1–23 (MRKLRGGQTKETRKQRQERKEEN) form a disordered region. Positions 8-23 (QTKETRKQRQERKEEN) are enriched in basic and acidic residues. Positions 8–33 (QTKETRKQRQERKEENLKIQQQMKTI) form a coiled coil. The chain crosses the membrane as a helical span at residues 31–51 (KTIVLPTIGVIFLCIVVYVFL).

This sequence belongs to the SMCO4 family.

It is found in the membrane. This Anopheles gambiae (African malaria mosquito) protein is Single-pass membrane and coiled-coil domain-containing protein 4 homolog.